A 254-amino-acid chain; its full sequence is Pre-miRNA 5'-monophosphate methyltransferase (254 aa).

One can recognise a Bin3-type SAM domain in the interval 34–254 (ENRLSLIPEA…DRSLLLFRRQ (221 aa)). S-adenosyl-L-methionine is bound by residues Arg36, Asn66, Asp99, and 124 to 125 (DI).

It belongs to the methyltransferase superfamily.

The protein localises to the cytoplasm. The catalysed reaction is a 5'-end 5'-phospho-ribonucleoside-RNA + S-adenosyl-L-methionine = a 5'-end (5'-methylphospho)-ribonucleoside-RNA + S-adenosyl-L-homocysteine. The enzyme catalyses a 5'-end 5'-phospho-ribonucleoside-RNA + 2 S-adenosyl-L-methionine = a 5'-end (5'-bismethylphospho)-ribonucleoside-RNA + 2 S-adenosyl-L-homocysteine. Functionally, O-methyltransferase that specifically monomethylates 5'-monophosphate of cytoplasmic histidyl tRNA (tRNA(His)), acting as a capping enzyme by protecting tRNA(His) from cleavage by DICER1. Also able, with less efficiently, to methylate the 5' monophosphate of a subset of pre-miRNAs, acting as a negative regulator of miRNA processing. The 5' monophosphate of pre-miRNAs is recognized by DICER1 and is required for pre-miRNAs processing: methylation at this position reduces the processing of pre-miRNAs by DICER1. Was also reported to mediate dimethylation of pre-miR-145; however dimethylation cannot be reproduced by another group which observes a monomethylation of pre-miR-145. This is Pre-miRNA 5'-monophosphate methyltransferase (bcdin3d) from Danio rerio (Zebrafish).